The chain runs to 78 residues: Conotoxin 1 (78 aa).

An N-terminal signal peptide occupies residues 1 to 22 (MKLTCMMFVAVLFLTASVFITA). A propeptide spanning residues 23–51 (DDSRNGIENLPRMRRHEMKNPKASKLNKR) is cleaved from the precursor. Glutamine 52 carries the pyrrolidone carboxylic acid modification. Intrachain disulfides connect cysteine 53–cysteine 69, cysteine 60–cysteine 73, and cysteine 68–cysteine 77.

The protein belongs to the conotoxin O1 superfamily. Expressed by the venom duct.

It is found in the secreted. This Conus imperialis (Imperial cone) protein is Conotoxin 1.